The sequence spans 168 residues: T-cell surface glycoprotein CD3 delta chain (168 aa).

An N-terminal signal peptide occupies residues 1-21 (MEHSRFLSCLILAALLSQVNP). The Extracellular portion of the chain corresponds to 22–102 (RILKVLEPED…CVELDTATLA (81 aa)). C37 and C74 are joined by a disulfide. Residues N38 and N56 are each glycosylated (N-linked (GlcNAc...) asparagine). Residues 103–123 (GMIITDIIATVLLALGVYCFA) traverse the membrane as a helical segment. Residues 124–168 (GHETGRFSRAADTQALMGNDQLYQPLRERNDAQYSRLGDKWARNK) lie on the Cytoplasmic side of the membrane. Residues 135-163 (DTQALMGNDQLYQPLRERNDAQYSRLGDK) enclose the ITAM domain. Phosphotyrosine occurs at positions 146 and 157.

In terms of assembly, the TCR-CD3 complex is composed of a CD3D/CD3E and a CD3G/CD3E heterodimers that preferentially associate with TCRalpha and TCRbeta, respectively, to form TCRalpha/CD3E/CD3G and TCRbeta/CD3G/CD3E trimers. In turn, the hexamer interacts with CD3Z homodimer to form the TCR-CD3 complex. Alternatively, TCRalpha and TCRbeta can be replaced by TCRgamma and TCRdelta. Interacts with coreceptors CD4 and CD8. In terms of processing, phosphorylated on Tyr residues after T-cell receptor triggering by LCK in association with CD4/CD8. In terms of tissue distribution, CD3D is mostly present on T-lymphocytes with its TCR-CD3 partners. Present also in fetal NK-cells.

It is found in the cell membrane. Its function is as follows. Part of the TCR-CD3 complex present on T-lymphocyte cell surface that plays an essential role in adaptive immune response. When antigen presenting cells (APCs) activate T-cell receptor (TCR), TCR-mediated signals are transmitted across the cell membrane by the CD3 chains CD3D, CD3E, CD3G and CD3Z. All CD3 chains contain immunoreceptor tyrosine-based activation motifs (ITAMs) in their cytoplasmic domain. Upon TCR engagement, these motifs become phosphorylated by Src family protein tyrosine kinases LCK and FYN, resulting in the activation of downstream signaling pathways. In addition of this role of signal transduction in T-cell activation, CD3D plays an essential role in thymocyte differentiation. Indeed, participates in correct intracellular TCR-CD3 complex assembly and surface expression. In absence of a functional TCR-CD3 complex, thymocytes are unable to differentiate properly. Interacts with CD4 and CD8 and thus serves to establish a functional link between the TCR and coreceptors CD4 and CD8, which is needed for activation and positive selection of CD4 or CD8 T-cells. This Bos taurus (Bovine) protein is T-cell surface glycoprotein CD3 delta chain (CD3D).